Reading from the N-terminus, the 506-residue chain is tRNA (guanine(6)-N(2))-methyltransferase THUMP3 (506 aa).

The segment at 144–172 is disordered; the sequence is KTKRRKLNPNSSKQKIDNGRGDTTVEKDV. Basic and acidic residues predominate over residues 157-172; the sequence is QKIDNGRGDTTVEKDV. Residues 170–286 enclose the THUMP domain; that stretch reads KDVKKELTNS…DNEVVVGIAL (117 aa).

Belongs to the methyltransferase superfamily. As to quaternary structure, part of the heterodimeric THUMPD3-TRM112 methyltransferase complex; this complex forms an active tRNA methyltransferase, where TRMT112 acts as an activator of the catalytic subunit THUMPD3.

It is found in the cytoplasm. It catalyses the reaction guanosine(6) in tRNA + S-adenosyl-L-methionine = N(2)-methylguanosine(6) in tRNA + S-adenosyl-L-homocysteine + H(+). It carries out the reaction guanosine(7) in tRNA + S-adenosyl-L-methionine = N(2)-methylguanosine(7) in tRNA + S-adenosyl-L-homocysteine + H(+). Its function is as follows. Catalytic subunit of the THUMPD3-TRM112 methyltransferase complex, that specifically mediates the S-adenosyl-L-methionine-dependent N(2)-methylation of guanosine nucleotide at position 6 (m2G6) in tRNAs. This is one of the major tRNA (guanine-N(2))-methyltransferases. Also catalyzes the S-adenosyl-L-methionine-dependent N(2)-methylation of guanosine nucleotide at position 7 of tRNA(Trp). The chain is tRNA (guanine(6)-N(2))-methyltransferase THUMP3 from Bos taurus (Bovine).